Here is a 375-residue protein sequence, read N- to C-terminus: 23S rRNA (uracil(747)-C(5))-methyltransferase RlmC (375 aa).

Residues Cys-3, Cys-11, Cys-14, and Cys-87 each coordinate [4Fe-4S] cluster. S-adenosyl-L-methionine-binding residues include Gln-212, Phe-241, Glu-262, and Asn-307. Residue Cys-334 is the Nucleophile of the active site.

The protein belongs to the class I-like SAM-binding methyltransferase superfamily. RNA M5U methyltransferase family. RlmC subfamily.

The catalysed reaction is uridine(747) in 23S rRNA + S-adenosyl-L-methionine = 5-methyluridine(747) in 23S rRNA + S-adenosyl-L-homocysteine + H(+). Its function is as follows. Catalyzes the formation of 5-methyl-uridine at position 747 (m5U747) in 23S rRNA. In Enterobacter sp. (strain 638), this protein is 23S rRNA (uracil(747)-C(5))-methyltransferase RlmC.